A 107-amino-acid chain; its full sequence is Virulence factor PGA16 (107 aa).

The first 18 residues, 1–18 (MRVFQIVYILIISNLIYA), serve as a signal peptide directing secretion. Residues 26-56 (SHHHKNDNNIADNTNNNNNNNNNNNNNNITN) form a disordered region. Residues 33–56 (NNIADNTNNNNNNNNNNNNNNITN) are compositionally biased toward low complexity. 2 N-linked (GlcNAc...) asparagine glycosylation sites follow: Asn-53 and Asn-56. Residue Gly-76 is the site of GPI-anchor amidated glycine attachment. Positions 77–107 (VAAMGGILGQNGWFYGDAGLMAAIFGAMLLL) are cleaved as a propeptide — removed in mature form.

It is found in the cell membrane. Functionally, cell surface GPI-anchored protein required for virulence. Mediates hyphal ramification which is important for the interaction with host cells. In Candida albicans (strain SC5314 / ATCC MYA-2876) (Yeast), this protein is Virulence factor PGA16 (PGA16).